A 334-amino-acid polypeptide reads, in one-letter code: Dihydroorotate dehydrogenase (quinone) (334 aa).

Residues 61–65 (AGLDK) and Thr-85 each bind FMN. Residue Lys-65 coordinates substrate. 110–114 (NRMGF) contributes to the substrate binding site. 2 residues coordinate FMN: Asn-138 and Asn-171. Asn-171 serves as a coordination point for substrate. Ser-174 (nucleophile) is an active-site residue. Asn-176 is a binding site for substrate. FMN is bound by residues Lys-216 and Thr-244. 245–246 (NT) provides a ligand contact to substrate. FMN is bound by residues Gly-266, Gly-295, and 316–317 (YT).

This sequence belongs to the dihydroorotate dehydrogenase family. Type 2 subfamily. In terms of assembly, monomer. FMN is required as a cofactor.

The protein resides in the cell membrane. The enzyme catalyses (S)-dihydroorotate + a quinone = orotate + a quinol. It participates in pyrimidine metabolism; UMP biosynthesis via de novo pathway; orotate from (S)-dihydroorotate (quinone route): step 1/1. Catalyzes the conversion of dihydroorotate to orotate with quinone as electron acceptor. In Idiomarina loihiensis (strain ATCC BAA-735 / DSM 15497 / L2-TR), this protein is Dihydroorotate dehydrogenase (quinone).